The chain runs to 154 residues: 3-hydroxyacyl-[acyl-carrier-protein] dehydratase FabZ (154 aa).

Residue His54 is part of the active site.

Belongs to the thioester dehydratase family. FabZ subfamily.

Its subcellular location is the cytoplasm. The catalysed reaction is a (3R)-hydroxyacyl-[ACP] = a (2E)-enoyl-[ACP] + H2O. In terms of biological role, involved in unsaturated fatty acids biosynthesis. Catalyzes the dehydration of short chain beta-hydroxyacyl-ACPs and long chain saturated and unsaturated beta-hydroxyacyl-ACPs. The sequence is that of 3-hydroxyacyl-[acyl-carrier-protein] dehydratase FabZ from Shewanella putrefaciens (strain CN-32 / ATCC BAA-453).